The primary structure comprises 407 residues: Ameloblastin (407 aa).

Residues 1 to 26 (MSASKIPLFKMKGLILFLSLVKMSLA) form the signal peptide. At P42 the chain carries Hydroxyproline. Position 48 is a phosphoserine (S48). 2 disordered regions span residues 124–143 (GVQV…PGQL) and 259–304 (QNSP…ENPA).

This sequence belongs to the ameloblastin family. In terms of tissue distribution, ameloblast-specific.

Its subcellular location is the secreted. The protein localises to the extracellular space. It is found in the extracellular matrix. Functionally, involved in the mineralization and structural organization of enamel. This is Ameloblastin (Ambn) from Mus musculus (Mouse).